Here is a 227-residue protein sequence, read N- to C-terminus: Cytidylate kinase (227 aa).

11–19 (GPSGAGKGT) is a binding site for ATP.

This sequence belongs to the cytidylate kinase family. Type 1 subfamily.

The protein resides in the cytoplasm. It catalyses the reaction CMP + ATP = CDP + ADP. The catalysed reaction is dCMP + ATP = dCDP + ADP. The protein is Cytidylate kinase of Pasteurella multocida (strain Pm70).